The chain runs to 121 residues: Small ribosomal subunit protein uS13 (121 aa).

Residues 94 to 121 form a disordered region; that stretch reads GLPLRGQRTRTNARTRKGPRRAAQSLKK.

It belongs to the universal ribosomal protein uS13 family. As to quaternary structure, part of the 30S ribosomal subunit. Forms a loose heterodimer with protein S19. Forms two bridges to the 50S subunit in the 70S ribosome.

In terms of biological role, located at the top of the head of the 30S subunit, it contacts several helices of the 16S rRNA. In the 70S ribosome it contacts the 23S rRNA (bridge B1a) and protein L5 of the 50S subunit (bridge B1b), connecting the 2 subunits; these bridges are implicated in subunit movement. Contacts the tRNAs in the A and P-sites. The sequence is that of Small ribosomal subunit protein uS13 from Paraburkholderia phytofirmans (strain DSM 17436 / LMG 22146 / PsJN) (Burkholderia phytofirmans).